The following is a 218-amino-acid chain: Large ribosomal subunit protein uL4 (218 aa).

The disordered stretch occupies residues 54–106 (GTHAVKNRGAVSGGGRKPWKQKGTGRARQGSIRAPQWYHGGVAHGPVPRDYSQ).

Belongs to the universal ribosomal protein uL4 family. In terms of assembly, part of the 50S ribosomal subunit.

Its function is as follows. One of the primary rRNA binding proteins, this protein initially binds near the 5'-end of the 23S rRNA. It is important during the early stages of 50S assembly. It makes multiple contacts with different domains of the 23S rRNA in the assembled 50S subunit and ribosome. Forms part of the polypeptide exit tunnel. This is Large ribosomal subunit protein uL4 from Bifidobacterium animalis subsp. lactis (strain AD011).